Here is a 554-residue protein sequence, read N- to C-terminus: Potassium-transporting ATPase potassium-binding subunit (554 aa).

12 helical membrane passes run 1–21 (MSSQ…LALA), 59–79 (WPAY…FLYL), 131–151 (GLAV…VALV), 174–194 (VRIL…AGAI), 246–266 (PNPL…FALT), 279–299 (GYAI…LMMW), 323–343 (FGIA…TGAV), 352–372 (GFGG…PGGV), 375–395 (GLYG…LMVG), 412–432 (FAAC…AVAM), 481–501 (IGIA…ALAG), and 525–545 (GLLV…ALAL).

Belongs to the KdpA family. The system is composed of three essential subunits: KdpA, KdpB and KdpC.

The protein localises to the cell membrane. In terms of biological role, part of the high-affinity ATP-driven potassium transport (or Kdp) system, which catalyzes the hydrolysis of ATP coupled with the electrogenic transport of potassium into the cytoplasm. This subunit binds the extracellular potassium ions and delivers the ions to the membrane domain of KdpB through an intramembrane tunnel. The polypeptide is Potassium-transporting ATPase potassium-binding subunit (Streptomyces griseus subsp. griseus (strain JCM 4626 / CBS 651.72 / NBRC 13350 / KCC S-0626 / ISP 5235)).